Here is a 271-residue protein sequence, read N- to C-terminus: Dihydropteroate synthase type-2 (271 aa).

The 259-residue stretch at 1 to 259 (MNKSLIIFGI…EPRPLRDGLA (259 aa)) folds into the Pterin-binding domain. Asn-12 is a binding site for 4-aminobenzoate. The diphosphate site is built by Asn-12, Phe-18, Ser-51, and Ser-52. Asn-12 contacts Mg(2+). 7,8-dihydropteroate is bound by residues Ser-52, Asp-85, Asn-104, Asp-174, Phe-179, Lys-213, and Ser-214. Residues Asp-85, Asn-104, and Asp-174 each contribute to the (7,8-dihydropterin-6-yl)methyl diphosphate site. 6-hydroxymethyl-7,8-dihydropterin-binding residues include Asn-104 and Asp-174. Lys-213 contacts (7,8-dihydropterin-6-yl)methyl diphosphate. Lys-213 provides a ligand contact to 6-hydroxymethyl-7,8-dihydropterin. A 4-aminobenzoate-binding site is contributed by Arg-247. Diphosphate contacts are provided by Arg-247 and His-249. Position 247 to 249 (247 to 249 (RTH)) interacts with (7,8-dihydropterin-6-yl)methyl diphosphate.

This sequence belongs to the DHPS family. Homodimer. Mg(2+) is required as a cofactor.

The enzyme catalyses (7,8-dihydropterin-6-yl)methyl diphosphate + 4-aminobenzoate = 7,8-dihydropteroate + diphosphate. It functions in the pathway cofactor biosynthesis; tetrahydrofolate biosynthesis; 7,8-dihydrofolate from 2-amino-4-hydroxy-6-hydroxymethyl-7,8-dihydropteridine diphosphate and 4-aminobenzoate: step 1/2. In terms of biological role, catalyzes the condensation of para-aminobenzoate (pABA) with 6-hydroxymethyl-7,8-dihydropterin diphosphate (DHPt-PP) to form 7,8-dihydropteroate (H2Pte), the immediate precursor of folate derivatives. Confers resistance to sulfonamide antibiotics, including sulfamethoxazole (SMX), sulfadiazine and sulfisoxazole. The type II enzyme is stable whereas type I DHPS loses its activity rapidly. This is Dihydropteroate synthase type-2 from Escherichia coli.